Consider the following 174-residue polypeptide: Small ribosomal subunit protein uS5c (174 aa).

The S5 DRBM domain occupies 17–80 (WEERVVQVKR…TDAKKHLVTV (64 aa)).

The protein belongs to the universal ribosomal protein uS5 family. As to quaternary structure, part of the 30S ribosomal subunit. Contacts protein S4.

It is found in the plastid. Its subcellular location is the chloroplast. Its function is as follows. With S4 and S12 plays an important role in translational accuracy. This is Small ribosomal subunit protein uS5c (rps5) from Pyropia yezoensis (Susabi-nori).